The sequence spans 465 residues: ATP synthase subunit beta (465 aa).

154 to 161 (GGAGVGKT) is an ATP binding site.

The protein belongs to the ATPase alpha/beta chains family. As to quaternary structure, F-type ATPases have 2 components, CF(1) - the catalytic core - and CF(0) - the membrane proton channel. CF(1) has five subunits: alpha(3), beta(3), gamma(1), delta(1), epsilon(1). CF(0) has three main subunits: a(1), b(2) and c(9-12). The alpha and beta chains form an alternating ring which encloses part of the gamma chain. CF(1) is attached to CF(0) by a central stalk formed by the gamma and epsilon chains, while a peripheral stalk is formed by the delta and b chains.

The protein resides in the cell inner membrane. The catalysed reaction is ATP + H2O + 4 H(+)(in) = ADP + phosphate + 5 H(+)(out). Produces ATP from ADP in the presence of a proton gradient across the membrane. The catalytic sites are hosted primarily by the beta subunits. The sequence is that of ATP synthase subunit beta from Methylobacillus flagellatus (strain ATCC 51484 / DSM 6875 / VKM B-1610 / KT).